Here is a 423-residue protein sequence, read N- to C-terminus: Protein CLP1 homolog (423 aa).

ATP contacts are provided by residues Glu-16, Lys-57, and 119-124 (DVGKST).

Belongs to the Clp1 family. Clp1 subfamily.

Its subcellular location is the nucleus. In terms of biological role, required for endonucleolytic cleavage during polyadenylation-dependent pre-mRNA 3'-end formation. The chain is Protein CLP1 homolog (cbc) from Drosophila melanogaster (Fruit fly).